Here is a 501-residue protein sequence, read N- to C-terminus: Beta-glucosidase 25 (501 aa).

The N-terminal stretch at 1-19 (MSLLTLVHILVSFSACVEA) is a signal peptide. Q39 lines the a beta-D-glucoside pocket. N107 carries an N-linked (GlcNAc...) asparagine glycan. Residues H140 and 185–186 (NE) contribute to the a beta-D-glucoside site. E186 functions as the Proton donor in the catalytic mechanism. C205 and C213 are disulfide-bonded. A beta-D-glucoside-binding positions include Y329, E402, W452, 459–460 (EW), and F468. Residue E402 is the Nucleophile of the active site. The N-linked (GlcNAc...) asparagine glycan is linked to N478.

Belongs to the glycosyl hydrolase 1 family.

It carries out the reaction Hydrolysis of terminal, non-reducing beta-D-glucosyl residues with release of beta-D-glucose.. In Oryza sativa subsp. japonica (Rice), this protein is Beta-glucosidase 25 (BGLU25).